We begin with the raw amino-acid sequence, 256 residues long: Homeobox-leucine zipper protein HOX18 (256 aa).

A disordered region spans residues 52-117 (YDHGRDEEQA…GGGGGTRKKL (66 aa)). Residues 102–112 (DGGSGSGGGGG) are compositionally biased toward gly residues. A DNA-binding region (homeobox) is located at residues 112–171 (GTRKKLQLTKEQSTLLEDSFRVHNILSHAQKHELARQLKLKPRQVEVWFQNRRARTKLKQ). The segment at 170-214 (KQTEVDCEFLKRCCESLTEENKQLKHELMELRRLASAAAAAAGSQ) is leucine-zipper.

This sequence belongs to the HD-ZIP homeobox family. Class II subfamily. As to expression, expressed in roots, leaf sheaths and blades and panicles.

Its subcellular location is the nucleus. Functionally, probable transcription factor. This chain is Homeobox-leucine zipper protein HOX18 (HOX18), found in Oryza sativa subsp. indica (Rice).